The primary structure comprises 625 residues: Probable thymidylate synthase (625 aa).

The segment at 224–323 (AVKNIDGQDD…PEPPVPFTSS (100 aa)) is disordered. Residues 243–257 (EEYDDDDDDDVDDNE) show a composition bias toward acidic residues. Composition is skewed to polar residues over residues 258 to 269 (QSNSMIETSANA) and 293 to 312 (SQAP…NVTT). DUMP contacts are provided by residues Arg350 and 477-478 (RR). Residue Cys497 is the Nucleophile of the active site. DUMP is bound by residues 524-527 (RSAD), Asn535, and 565-567 (HIY). A (6R)-5,10-methylene-5,6,7,8-tetrahydrofolate-binding site is contributed by Asp527.

This sequence in the N-terminal section; belongs to the HFCD (homo-oligomeric flavin containing Cys decarboxylase) superfamily. It in the C-terminal section; belongs to the thymidylate synthase family.

It localises to the cytoplasm. The catalysed reaction is dUMP + (6R)-5,10-methylene-5,6,7,8-tetrahydrofolate = 7,8-dihydrofolate + dTMP. The protein operates within pyrimidine metabolism; dTTP biosynthesis. Functionally, required for both nuclear and mitochondrial DNA synthesis. In Schizosaccharomyces pombe (strain 972 / ATCC 24843) (Fission yeast), this protein is Probable thymidylate synthase.